Consider the following 389-residue polypeptide: 8-amino-7-oxononanoate synthase (389 aa).

Residue R31 participates in substrate binding. A pyridoxal 5'-phosphate-binding site is contributed by 109-110 (GY). A substrate-binding site is contributed by H134. Pyridoxal 5'-phosphate contacts are provided by residues S180, 205–208 (DEAH), and 236–239 (TLSK). K239 bears the N6-(pyridoxal phosphate)lysine mark. Residue T349 participates in substrate binding.

The protein belongs to the class-II pyridoxal-phosphate-dependent aminotransferase family. BioF subfamily. In terms of assembly, homodimer. Pyridoxal 5'-phosphate serves as cofactor.

It carries out the reaction 6-carboxyhexanoyl-[ACP] + L-alanine + H(+) = (8S)-8-amino-7-oxononanoate + holo-[ACP] + CO2. The protein operates within cofactor biosynthesis; biotin biosynthesis. Functionally, catalyzes the decarboxylative condensation of pimeloyl-[acyl-carrier protein] and L-alanine to produce 8-amino-7-oxononanoate (AON), [acyl-carrier protein], and carbon dioxide. The protein is 8-amino-7-oxononanoate synthase of Mycobacterium marinum (strain ATCC BAA-535 / M).